The primary structure comprises 351 residues: tRNA-specific 2-thiouridylase MnmA (351 aa).

ATP is bound by residues 7–14 (GLSGGVDS) and leucine 33. Cysteine 94 serves as the catalytic Nucleophile. An intrachain disulfide couples cysteine 94 to cysteine 193. Position 119 (glycine 119) interacts with ATP. The segment at 143 to 145 (KDQ) is interaction with tRNA. Cysteine 193 serves as the catalytic Cysteine persulfide intermediate. Residues 298–299 (RY) are interaction with tRNA.

It belongs to the MnmA/TRMU family.

It is found in the cytoplasm. It carries out the reaction S-sulfanyl-L-cysteinyl-[protein] + uridine(34) in tRNA + AH2 + ATP = 2-thiouridine(34) in tRNA + L-cysteinyl-[protein] + A + AMP + diphosphate + H(+). Catalyzes the 2-thiolation of uridine at the wobble position (U34) of tRNA, leading to the formation of s(2)U34. The sequence is that of tRNA-specific 2-thiouridylase MnmA from Nostoc punctiforme (strain ATCC 29133 / PCC 73102).